Reading from the N-terminus, the 133-residue chain is Ribosome-binding factor A (133 aa).

The protein belongs to the RbfA family. As to quaternary structure, monomer. Binds 30S ribosomal subunits, but not 50S ribosomal subunits or 70S ribosomes.

Its subcellular location is the cytoplasm. Its function is as follows. One of several proteins that assist in the late maturation steps of the functional core of the 30S ribosomal subunit. Associates with free 30S ribosomal subunits (but not with 30S subunits that are part of 70S ribosomes or polysomes). Required for efficient processing of 16S rRNA. May interact with the 5'-terminal helix region of 16S rRNA. This chain is Ribosome-binding factor A, found in Proteus mirabilis (strain HI4320).